The chain runs to 212 residues: RING-H2 finger protein ATL68 (212 aa).

The helical transmembrane segment at 24–44 threads the bilayer; the sequence is LGLGYSIAIALGFLVLISTII. The RING-type; atypical zinc-finger motif lies at 136–178; the sequence is CSICLCEYMEEEMLRMMPECKHYFHVYCLDAWLKLNGSCPVCR. The disordered stretch occupies residues 182–212; it reads LPTPQSTPQSTPLSEVVPLSQYAADRRRSRR. Residues 185-195 are compositionally biased toward low complexity; sequence PQSTPQSTPLS.

Belongs to the RING-type zinc finger family. ATL subfamily.

It is found in the membrane. It catalyses the reaction S-ubiquitinyl-[E2 ubiquitin-conjugating enzyme]-L-cysteine + [acceptor protein]-L-lysine = [E2 ubiquitin-conjugating enzyme]-L-cysteine + N(6)-ubiquitinyl-[acceptor protein]-L-lysine.. Its pathway is protein modification; protein ubiquitination. This is RING-H2 finger protein ATL68 (ATL68) from Arabidopsis thaliana (Mouse-ear cress).